The following is a 113-amino-acid chain: Large ribosomal subunit protein bL19 (113 aa).

This sequence belongs to the bacterial ribosomal protein bL19 family.

This protein is located at the 30S-50S ribosomal subunit interface and may play a role in the structure and function of the aminoacyl-tRNA binding site. This Mycobacterium avium (strain 104) protein is Large ribosomal subunit protein bL19.